The chain runs to 22 residues: Large ribosomal subunit protein bL32 (22 aa).

The tract at residues 1-22 (CVQQNKKSRSARDMXXSXDALE) is disordered. Residues 13-22 (DMXXSXDALE) are compositionally biased toward low complexity.

Belongs to the bacterial ribosomal protein bL32 family.

The sequence is that of Large ribosomal subunit protein bL32 (rpmF) from Ectopseudomonas mendocina (Pseudomonas mendocina).